The sequence spans 227 residues: Phosphoribosylformylglycinamidine synthase subunit PurQ (227 aa).

The region spanning 2 to 226 (KFAVIQFPGS…VKAWKEEQVN (225 aa)) is the Glutamine amidotransferase type-1 domain. The active-site Nucleophile is Cys86. Active-site residues include His195 and Glu197.

As to quaternary structure, part of the FGAM synthase complex composed of 1 PurL, 1 PurQ and 2 PurS subunits.

It localises to the cytoplasm. It carries out the reaction N(2)-formyl-N(1)-(5-phospho-beta-D-ribosyl)glycinamide + L-glutamine + ATP + H2O = 2-formamido-N(1)-(5-O-phospho-beta-D-ribosyl)acetamidine + L-glutamate + ADP + phosphate + H(+). The enzyme catalyses L-glutamine + H2O = L-glutamate + NH4(+). It participates in purine metabolism; IMP biosynthesis via de novo pathway; 5-amino-1-(5-phospho-D-ribosyl)imidazole from N(2)-formyl-N(1)-(5-phospho-D-ribosyl)glycinamide: step 1/2. Its function is as follows. Part of the phosphoribosylformylglycinamidine synthase complex involved in the purines biosynthetic pathway. Catalyzes the ATP-dependent conversion of formylglycinamide ribonucleotide (FGAR) and glutamine to yield formylglycinamidine ribonucleotide (FGAM) and glutamate. The FGAM synthase complex is composed of three subunits. PurQ produces an ammonia molecule by converting glutamine to glutamate. PurL transfers the ammonia molecule to FGAR to form FGAM in an ATP-dependent manner. PurS interacts with PurQ and PurL and is thought to assist in the transfer of the ammonia molecule from PurQ to PurL. The sequence is that of Phosphoribosylformylglycinamidine synthase subunit PurQ from Listeria monocytogenes serotype 4b (strain CLIP80459).